Consider the following 293-residue polypeptide: Heterogeneous nuclear ribonucleoprotein C-like 1 (293 aa).

The region spanning 16–87 is the RRM domain; it reads SRVFIGNLNT…QVVDINLAAE (72 aa). Disordered stretches follow at residues 137 to 177 and 206 to 293; these read ALAV…KLKG and KEQS…QDDS. A coiled-coil region spans residues 177 to 225; that stretch reads GDDLQAIKQELTQIKQKVDSLLENLEKIEKEQSKQEVEVKNAKSEEEQS. Composition is skewed to basic and acidic residues over residues 206–222 and 229–240; these read KEQS…KSEE and MKKDETHVKMES. Acidic residues-rich tracts occupy residues 242–267 and 275–284; these read GGAE…DDQL and KEAEEGEDDR.

The protein belongs to the RRM HNRPC family. RALY subfamily.

The protein localises to the nucleus. Functionally, may play a role in nucleosome assembly by neutralizing basic proteins such as A and B core hnRNPs. The protein is Heterogeneous nuclear ribonucleoprotein C-like 1 (HNRNPCL1) of Homo sapiens (Human).